The primary structure comprises 129 residues: Small ribosomal subunit protein uS11 (129 aa).

Belongs to the universal ribosomal protein uS11 family. In terms of assembly, part of the 30S ribosomal subunit. Interacts with proteins S7 and S18. Binds to IF-3.

Functionally, located on the platform of the 30S subunit, it bridges several disparate RNA helices of the 16S rRNA. Forms part of the Shine-Dalgarno cleft in the 70S ribosome. This is Small ribosomal subunit protein uS11 from Francisella tularensis subsp. holarctica (strain FTNF002-00 / FTA).